A 270-amino-acid chain; its full sequence is NAD kinase (270 aa).

The active-site Proton acceptor is the aspartate 57. Residues aspartate 57–glycine 58, asparagine 125–glutamate 126, arginine 150, and asparagine 227 contribute to the NAD(+) site.

It belongs to the NAD kinase family. A divalent metal cation serves as cofactor.

The protein localises to the cytoplasm. The catalysed reaction is NAD(+) + ATP = ADP + NADP(+) + H(+). Functionally, involved in the regulation of the intracellular balance of NAD and NADP, and is a key enzyme in the biosynthesis of NADP. Catalyzes specifically the phosphorylation on 2'-hydroxyl of the adenosine moiety of NAD to yield NADP. This Ureaplasma parvum serovar 3 (strain ATCC 700970) protein is NAD kinase.